A 195-amino-acid chain; its full sequence is Probable GTP-binding protein EngB (195 aa).

An EngB-type G domain is found at 24 to 195; sequence DIPEIALAGR…AAWDAILSKI (172 aa). GTP is bound by residues 32–39, 59–63, 77–80, 144–147, and 176–178; these read GRSNVGKS, GKTQL, DVPG, TKAD, and FSS. 2 residues coordinate Mg(2+): serine 39 and threonine 61.

Belongs to the TRAFAC class TrmE-Era-EngA-EngB-Septin-like GTPase superfamily. EngB GTPase family. It depends on Mg(2+) as a cofactor.

Functionally, necessary for normal cell division and for the maintenance of normal septation. In Streptococcus sanguinis (strain SK36), this protein is Probable GTP-binding protein EngB.